The primary structure comprises 142 residues: MRNFDLSPLMRQWIGFDKLANALQNAGESQSFPPYNIEKSDDNHYRITLALAGFRQEDLEILLEGTRLSVKGTPEQPKEEKKWLHQGLMNQPFSLSFTLAENMEVSGATFVNGLLHIDLIRNEPEPIAAQRIAISERPALNS.

A sHSP domain is found at 26-137 (AGESQSFPPY…AAQRIAISER (112 aa)).

This sequence belongs to the small heat shock protein (HSP20) family. As to quaternary structure, homodimer. Forms homomultimers of about 100-150 subunits at optimal growth temperatures. Conformation changes to oligomers at high temperatures or high ionic concentrations. The decrease in size of the multimers is accompanied by an increase in chaperone activity.

The protein resides in the cytoplasm. In terms of biological role, associates with aggregated proteins, together with IbpA, to stabilize and protect them from irreversible denaturation and extensive proteolysis during heat shock and oxidative stress. Aggregated proteins bound to the IbpAB complex are more efficiently refolded and reactivated by the ATP-dependent chaperone systems ClpB and DnaK/DnaJ/GrpE. Its activity is ATP-independent. This Escherichia coli O7:K1 (strain IAI39 / ExPEC) protein is Small heat shock protein IbpB.